The primary structure comprises 184 residues: uncharacterized protein (184 aa).

This is an uncharacterized protein from Caenorhabditis elegans.